Consider the following 228-residue polypeptide: UPF0134 protein MPN_137 (228 aa).

Belongs to the UPF0134 family.

This chain is UPF0134 protein MPN_137, found in Mycoplasma pneumoniae (strain ATCC 29342 / M129 / Subtype 1) (Mycoplasmoides pneumoniae).